The following is a 64-amino-acid chain: Putative neurotoxin 4 (64 aa).

Residues 1 to 18 form the signal peptide; sequence MKSKFAVLFFTLFLLALA.

It belongs to the scolopendra neurotoxin 6 family. In terms of processing, contains 3 disulfide bonds. As to expression, expressed by the venom gland.

Its subcellular location is the secreted. This chain is Putative neurotoxin 4, found in Scolopendra mutilans (Chinese red-headed centipede).